Reading from the N-terminus, the 198-residue chain is Dermorphin-2 (198 aa).

Positions 1-20 (MSFLKKSLLLILFLGLVSLS) are cleaved as a signal peptide. Residues 21 to 45 (VCKEEKRVSEEENENEENHEEGSEM) constitute a propeptide that is removed on maturation. The tract at residues 24–198 (EEKRVSEEEN…AFGYPSGEAK (175 aa)) is disordered. Alanine 49 is subject to D-alanine (Ala). Serine amide is present on serine 54. Over residues 56-65 (EAKKIKRESE) the composition is skewed to basic and acidic residues. Residues 56-80 (EAKKIKRESEEEKEIEENHEEGSEM) constitute a propeptide that is removed on maturation. At alanine 84 the chain carries D-alanine (Ala). Serine 89 bears the Serine amide mark. Positions 91 to 115 (EAKKIKRESEEENENEENHEEGSEM) are excised as a propeptide. The segment covering 100 to 109 (EEENENEENH) has biased composition (acidic residues). Alanine 119 carries the post-translational modification D-alanine (Ala). Serine amide is present on serine 124. A compositionally biased stretch (basic and acidic residues) spans 126-135 (EAKKIKRESE). The propeptide occupies 126–150 (EAKKIKRESEEEKEIEENHEEGSEM). Residue alanine 154 is modified to D-alanine (Ala). At serine 159 the chain carries Serine amide. The propeptide occupies 161 to 185 (EAKKIKRESEEENENEENHEEGSEM). The segment covering 170 to 179 (EEENENEENH) has biased composition (acidic residues). Alanine 189 carries the post-translational modification D-alanine (Ala). Residue serine 194 is modified to Serine amide. Positions 196–198 (EAK) are excised as a propeptide.

It belongs to the frog skin active peptide (FSAP) family. Dermorphin subfamily. In terms of tissue distribution, expressed by the skin glands.

Its subcellular location is the secreted. Dermorphin has a very potent opiate-like activity. It has high affinity and selectivity for mu-type opioid receptors. This chain is Dermorphin-2, found in Phyllomedusa sauvagei (Sauvage's leaf frog).